Consider the following 190-residue polypeptide: Peptidyl-tRNA hydrolase (190 aa).

A tRNA-binding site is contributed by Tyr14. His19 functions as the Proton acceptor in the catalytic mechanism. Residues Tyr64, Asn66, and Asn112 each contribute to the tRNA site.

The protein belongs to the PTH family. In terms of assembly, monomer.

The protein localises to the cytoplasm. It carries out the reaction an N-acyl-L-alpha-aminoacyl-tRNA + H2O = an N-acyl-L-amino acid + a tRNA + H(+). Hydrolyzes ribosome-free peptidyl-tRNAs (with 1 or more amino acids incorporated), which drop off the ribosome during protein synthesis, or as a result of ribosome stalling. Its function is as follows. Catalyzes the release of premature peptidyl moieties from peptidyl-tRNA molecules trapped in stalled 50S ribosomal subunits, and thus maintains levels of free tRNAs and 50S ribosomes. The sequence is that of Peptidyl-tRNA hydrolase from Pelodictyon phaeoclathratiforme (strain DSM 5477 / BU-1).